The following is a 158-amino-acid chain: MQAIPMTLRGAEKLREELDFLKSVRRPEIIAAIAEAREHGDLKENAEYHAAREQQGFCEGRIKDIEAKLSNAQVIDVTKMPNNGRVIFGATVTVLNLDTDEEQTYRIVGDDEADFKQNLISVNSPIARGLIGKEQDDVVVIKTPGGDVEYEVLKVEYL.

This sequence belongs to the GreA/GreB family.

In terms of biological role, necessary for efficient RNA polymerase transcription elongation past template-encoded arresting sites. The arresting sites in DNA have the property of trapping a certain fraction of elongating RNA polymerases that pass through, resulting in locked ternary complexes. Cleavage of the nascent transcript by cleavage factors such as GreA or GreB allows the resumption of elongation from the new 3'terminus. GreA releases sequences of 2 to 3 nucleotides. The protein is Transcription elongation factor GreA of Salmonella typhi.